The following is a 188-amino-acid chain: Transcription factor FapR (188 aa).

It belongs to the FapR family.

Functionally, transcriptional factor involved in regulation of membrane lipid biosynthesis by repressing genes involved in fatty acid and phospholipid metabolism. This Bacillus licheniformis (strain ATCC 14580 / DSM 13 / JCM 2505 / CCUG 7422 / NBRC 12200 / NCIMB 9375 / NCTC 10341 / NRRL NRS-1264 / Gibson 46) protein is Transcription factor FapR.